The chain runs to 230 residues: Demethylmenaquinone methyltransferase (230 aa).

S-adenosyl-L-methionine-binding positions include Thr62, Asp80, 100-101 (DA), and Ser117.

Belongs to the class I-like SAM-binding methyltransferase superfamily. MenG/UbiE family.

The catalysed reaction is a 2-demethylmenaquinol + S-adenosyl-L-methionine = a menaquinol + S-adenosyl-L-homocysteine + H(+). Its pathway is quinol/quinone metabolism; menaquinone biosynthesis; menaquinol from 1,4-dihydroxy-2-naphthoate: step 2/2. In terms of biological role, methyltransferase required for the conversion of demethylmenaquinol (DMKH2) to menaquinol (MKH2). The chain is Demethylmenaquinone methyltransferase from Mycobacterium sp. (strain JLS).